Consider the following 218-residue polypeptide: Capsid protein (218 aa).

Met-1 is subject to N-acetylmethionine; by host. The disordered stretch occupies residues 1 to 30 (MDKSGSPNASRTSRRRRPRRGSRSASGADA). The segment covering 12 to 22 (TSRRRRPRRGS) has biased composition (basic residues).

This sequence belongs to the cucumovirus capsid protein family.

It localises to the virion. In terms of biological role, capsid protein. Probably binds RNA and plays a role in packaging. In Cucumber mosaic virus (strain Q) (CMV), this protein is Capsid protein.